The following is a 286-amino-acid chain: Rhomboid-type serine protease 2 (286 aa).

The next 6 membrane-spanning stretches (helical) occupy residues 18–38 (ITQYPALTVGLSVFTFLLLVI), 66–86 (SFYLLFHRGFTHWLLNVVGLF), 99–119 (VFTGVTLNVLAVTAGLQFCIV), 122–142 (LLYPNTQVIGLSGVVFSFMSF), 164–183 (VSIPTLYSPFIFLIVCMVLI), and 188–210 (FWGHLAGISSGYLLALGYIKFLY). The active-site Nucleophile is S133. H191 is an active-site residue.

Belongs to the peptidase S54 family.

The protein resides in the golgi apparatus membrane. It localises to the golgi apparatus. It is found in the cis-Golgi network membrane. It carries out the reaction Cleaves type-1 transmembrane domains using a catalytic dyad composed of serine and histidine that are contributed by different transmembrane domains.. Probable rhomboid-type serine protease that catalyzes intramembrane proteolysis. The protein is Rhomboid-type serine protease 2 (RBD2) of Debaryomyces hansenii (strain ATCC 36239 / CBS 767 / BCRC 21394 / JCM 1990 / NBRC 0083 / IGC 2968) (Yeast).